A 156-amino-acid polypeptide reads, in one-letter code: Small ribosomal subunit protein uS7 (156 aa).

This sequence belongs to the universal ribosomal protein uS7 family. Part of the 30S ribosomal subunit. Contacts proteins S9 and S11.

Its function is as follows. One of the primary rRNA binding proteins, it binds directly to 16S rRNA where it nucleates assembly of the head domain of the 30S subunit. Is located at the subunit interface close to the decoding center, probably blocks exit of the E-site tRNA. The protein is Small ribosomal subunit protein uS7 of Staphylococcus aureus (strain bovine RF122 / ET3-1).